Here is a 348-residue protein sequence, read N- to C-terminus: tRNA pseudouridine synthase D (348 aa).

Position 27 (Phe-27) interacts with substrate. The active-site Nucleophile is the Asp-80. Asn-129 lines the substrate pocket. A TRUD domain is found at 155 to 303; sequence GVPNYFGSQR…VEPARRAVLL (149 aa). Residue Phe-329 participates in substrate binding.

This sequence belongs to the pseudouridine synthase TruD family.

It carries out the reaction uridine(13) in tRNA = pseudouridine(13) in tRNA. Its function is as follows. Responsible for synthesis of pseudouridine from uracil-13 in transfer RNAs. In Pectobacterium atrosepticum (strain SCRI 1043 / ATCC BAA-672) (Erwinia carotovora subsp. atroseptica), this protein is tRNA pseudouridine synthase D.